A 505-amino-acid polypeptide reads, in one-letter code: MSGIDFKQKISFQRPFSKPIEAEEEYDIVRQFESDRGRIVNSAAIRRLQQKTQVFPLERNAAVRSRLTHSMEVQQVGRHIAKEILNRFKQDGRVDALGLTKLLDPFESIVEMACLMHDIGNPPFGHFGESAINNWFSQRLDPASCGSEPASNDRCQVSALRLHEGESDLNRLRSRIRHDLSHFEGNAQAIRLVHTLLKLNLTYAQVGCILKYTRPAYWASDIPASHNYLMKKPGFYLAEEAFVDRLRRELNMGEFDRFPLTYIMEAADDISYCVADLEDAVEKNIFTVEQLYQHLTQEWGEVTPGDLFDKTVASAFRKIAHGGARRSSEDQFFMYLRVFTVARLVPHAAQRFIDNLEAVYQGNFNQALLEDSSPAYQLLKIFKNVAFKHVFNHPEVEQLELQGYRVISGLLDIYSPLLAMPLADFTLLVQEDSHRAYPIETRLFHKLSTKHRLAYIEAIEGLQHLSPEQLAIREYYFRARLLQDYISGMTDLYAYDEYRRLMAAE.

Residues 66–273 enclose the HD domain; sequence RLTHSMEVQQ…MEAADDISYC (208 aa).

Belongs to the dGTPase family. Type 1 subfamily. In terms of assembly, homotetramer. It depends on Mg(2+) as a cofactor.

The enzyme catalyses dGTP + H2O = 2'-deoxyguanosine + triphosphate + H(+). DGTPase preferentially hydrolyzes dGTP over the other canonical NTPs. This is Deoxyguanosinetriphosphate triphosphohydrolase from Serratia proteamaculans (strain 568).